The primary structure comprises 402 residues: CD2 homolog (402 aa).

The signal sequence occupies residues 1 to 16 (MIIIVIFLMCLKIVLN). At 17–204 (NIIIWSTLNQ…ILKYQNYLST (188 aa)) the chain is on the extracellular side. 18 N-linked (GlcNAc...) asparagine; by host glycosylation sites follow: asparagine 25, asparagine 37, asparagine 52, asparagine 55, asparagine 72, asparagine 77, asparagine 81, asparagine 89, asparagine 95, asparagine 108, asparagine 125, asparagine 137, asparagine 148, asparagine 153, asparagine 169, asparagine 177, asparagine 184, and asparagine 190. Cystine bridges form between cysteine 126–cysteine 191 and cysteine 133–cysteine 174. A helical transmembrane segment spans residues 205 to 225 (LFYIIIFIVSGLIIGIFISII). The Cytoplasmic portion of the chain corresponds to 226–402 (SVLSIRRKRK…ISLIHVDRII (177 aa)). Residues 238 to 276 (VEEIESPPPSESNEEDISHDDTTSIHEPSPREPLLPKPY) form a disordered region. Residues 256 to 267 (HDDTTSIHEPSP) are compositionally biased toward basic and acidic residues. 11 repeat units span residues 302 to 307 (KPCPPP), 308 to 313 (KPCPPP), 314 to 319 (KPCPPP), 320 to 325 (KPCPPP), 326 to 331 (KPCSPP), 332 to 337 (KPCRPP), 338 to 343 (KPCPPP), 344 to 349 (KPCPPP), 350 to 355 (KPCPPP), 356 to 361 (KPCPPS), and 362 to 367 (KPCPSP). Positions 302 to 367 (KPCPPPKPCP…CPPSKPCPSP (66 aa)) are 11 X 6 AA tandem repeats of K-P-C-[PRS]-[P]-[PS]. The span at 319-386 (PKPCPPPKPC…PSIPLLPNIP (68 aa)) shows a compositional bias: pro residues. A disordered region spans residues 319–388 (PKPCPPPKPC…IPLLPNIPPL (70 aa)).

The protein belongs to the asfivirus CD2 homolog protein family. In terms of assembly, both glycosylated and nonglycosylated forms interact (via C-terminus) with the host AP-1 complex. Cleaved into two fragments of 63 kDa and 26 kDa containing respectively the glycosylated N-terminus and the nonglycosylated C-terminus. A full-length 89-kDa glycosylated form also exists.

The protein localises to the host cell membrane. Its subcellular location is the virion membrane. It localises to the host Golgi apparatus. In terms of biological role, may play an immunosuppressive role by inhibiting lymphocyte proliferation and subsequently facilitating viral replication and generalization of infection. Responsible for viral hemadsorption, which may help viral spread. Increases virus replication in the tick vector at the step of virus uptake or replication in the tick gut. May play a role in the host Golgi reorganization to yield viral factories. May play a role in host cell penetration. This is CD2 homolog from Ornithodoros (relapsing fever ticks).